Consider the following 1199-residue polypeptide: Metabotropic glutamate receptor 1 (1199 aa).

Positions 1–20 are cleaved as a signal peptide; it reads MVRLLLIFFPMIFLEMSILP. Residues 21–592 are Extracellular-facing; sequence RMPDRKVLLA…IRYLEWSDIE (572 aa). Cysteines 67 and 109 form a disulfide. Residue Y74 coordinates L-glutamate. Residue N98 is glycosylated (N-linked (GlcNAc...) asparagine). Residues S165 and 186 to 188 each bind L-glutamate; that span reads SAT. An N-linked (GlcNAc...) asparagine glycan is attached at N223. Residue Y236 coordinates L-glutamate. Residues C289 and C291 are joined by a disulfide bond. L-glutamate is bound at residue D318. A disulfide bond links C378 and C394. N397 carries N-linked (GlcNAc...) asparagine glycosylation. K409 contributes to the L-glutamate binding site. C432 and C439 are disulfide-bonded. N515 carries an N-linked (GlcNAc...) asparagine glycan. Residues 593 to 615 form a helical membrane-spanning segment; that stretch reads SIIAIAFSCLGILVTLFVTLIFV. Residues 616 to 629 lie on the Cytoplasmic side of the membrane; sequence LYRDTPVVKSSSRE. A helical transmembrane segment spans residues 630–650; that stretch reads LCYIILAGIFLGYVCPFTLIA. The Extracellular portion of the chain corresponds to 651-658; it reads KPTTTSCY. C657 and C746 are oxidised to a cystine. A helical membrane pass occupies residues 659–680; the sequence is LQRLLVGLSSAMCYSALVTKTN. At 681 to 703 the chain is on the cytoplasmic side; that stretch reads RIARILAGSKKKICTRKPRFMSA. Residues 704 to 727 traverse the membrane as a helical segment; the sequence is WAQVIIASILISVQLTLVVTLIIM. Over 728 to 750 the chain is Extracellular; it reads EPPMPILSYPSIKEVYLICNTSN. N-linked (GlcNAc...) asparagine glycosylation occurs at N747. A helical membrane pass occupies residues 751 to 772; that stretch reads LGVVAPVGYNGLLIMSCTYYAF. Over 773-785 the chain is Cytoplasmic; the sequence is KTRNVPANFNEAK. A helical transmembrane segment spans residues 786–807; that stretch reads YIAFTMYTTCIIWLAFVPIYFG. Topologically, residues 808 to 815 are extracellular; sequence SNYKIITT. A helical transmembrane segment spans residues 816–840; sequence CFAVSLSVTVALGCMFTPKMYIIIA. Residues 841–1199 are Cytoplasmic-facing; sequence KPERNVRSAF…RDYKQSSSTL (359 aa). S853 carries the post-translational modification Phosphoserine. T871 is modified (phosphothreonine). Disordered regions lie at residues 882–906, 959–1035, and 1055–1082; these read GAGN…APKG, EEDN…QPKS, and HAVL…QHLQ. Residues 885-895 are compositionally biased toward polar residues; that stretch reads NANSNGKSVSW. 2 positions are modified to phosphoserine: S894 and S969. The segment covering 1012-1032 has biased composition (pro residues); it reads GLPPPLPQQQQQPPPQPPPQQ. S1097 carries the post-translational modification Phosphoserine. The tract at residues 1118–1177 is disordered; sequence VYEREGNTEEDDLEEEEDLPAASKLTPEDSPALTPPSPFRDSVASGSSVPSSPVSESVLC. Acidic residues predominate over residues 1125–1136; that stretch reads TEEDDLEEEEDL. S1147 carries the post-translational modification Phosphoserine. The residue at position 1151 (T1151) is a Phosphothreonine. S1154 carries the post-translational modification Phosphoserine. Over residues 1159 to 1175 the composition is skewed to low complexity; that stretch reads SVASGSSVPSSPVSESV.

The protein belongs to the G-protein coupled receptor 3 family. As to quaternary structure, homodimer; disulfide-linked. The PPXXF motif binds HOMER1, HOMER2 and HOMER3. Interacts with TAMALIN. Interacts with RYR1, RYR2, ITPR1, SHANK1 and SHANK3. Interacts with SHIA1. In terms of tissue distribution, expressed in the striatum (at protein level). Expressed in type II unipolar brush cells of the cerebellum (at protein level).

It localises to the cell membrane. It is found in the postsynaptic cell membrane. The protein resides in the cell projection. The protein localises to the dendrite. Its function is as follows. G-protein coupled receptor for glutamate. Ligand binding causes a conformation change that triggers signaling via guanine nucleotide-binding proteins (G proteins) and modulates the activity of down-stream effectors. Signaling activates a phosphatidylinositol-calcium second messenger system. May participate in the central action of glutamate in the CNS, such as long-term potentiation in the hippocampus and long-term depression in the cerebellum (By. similarity). May function in the light response in the retina. Induces GRID1 and GRID2 cation-channel activation via GNAQ-PLC-PKC pathway in dopaminergic neurons and cerebellar Purkinje cell, respectively. The chain is Metabotropic glutamate receptor 1 (Grm1) from Mus musculus (Mouse).